The sequence spans 706 residues: Elongation factor G (706 aa).

Residues 15-291 (LKTRNIGISA…GVLDYLASPV (277 aa)) enclose the tr-type G domain. Residues 24-31 (AHIDSGKT), 91-95 (DTPGH), and 145-148 (NKLD) contribute to the GTP site.

The protein belongs to the TRAFAC class translation factor GTPase superfamily. Classic translation factor GTPase family. EF-G/EF-2 subfamily.

The protein resides in the cytoplasm. Its function is as follows. Catalyzes the GTP-dependent ribosomal translocation step during translation elongation. During this step, the ribosome changes from the pre-translocational (PRE) to the post-translocational (POST) state as the newly formed A-site-bound peptidyl-tRNA and P-site-bound deacylated tRNA move to the P and E sites, respectively. Catalyzes the coordinated movement of the two tRNA molecules, the mRNA and conformational changes in the ribosome. In Leptospira borgpetersenii serovar Hardjo-bovis (strain L550), this protein is Elongation factor G.